Here is a 249-residue protein sequence, read N- to C-terminus: Methyltransferase 1 (249 aa).

This sequence belongs to the FkbM methyltransferase family.

It participates in secondary metabolite biosynthesis. Its function is as follows. Methyltransferase; part of the pathway that mediates the biosynthesis of tenellin-type 2-pyridones, iron-chelating compounds involved in iron stress tolerance, competition with the natural competitor fungus Metarhizium robertsii and insect hosts infection. Methylates pyridovericin-N-O-(beta-D-glucopyranoside) produced by the UDP-glucosyltransferase GT1 to yield pyridovericin-N-O-(4-O-methyl-beta-D-glucopyranoside) (PMGP). The pathway begins with the assembly of the polyketide-amino acid backbone by the hybrid PKS-NRPS tenS with the help of the enoyl reductase tenC. These enzymes catalyze the synthesis of the pyrrolidine-2-dione intermediates pretellinin A, 11-hydropretellenin A, 12-hydropretellenin A, 13-hydropretellenin A, 14-hydropretellenin A, 12-oxopretellenin A and prototellinin D. The cytochrome P450 monooxygenase tenA then catalyzes an oxidative ring expansion of pretenellin A and 14-hydropretellenin A to form the 2-pyridone core, leading to pretenellin B and pyridovericin, respectively. The cytochrome P450 monooxygenase tenB is then required for the selective N-hydroxylation of the 2-pyridone nitrogen of yield tellinin and 15-hydroxytellenin (15-HT), respectively. The UDP-glucosyltransferase GT1 and the methyltransferase MT1, located outside the tenS gene cluster, contribute to the stepwise glycosylation and methylation of 15-HT to obtain the glycoside pyridovericin-N-O-(4-O-methyl-beta-D-glucopyranoside) (PMGP). Additional related compounds such as 1-O-methyl-15-HT, (8Z)-1-O-methyl-15-HT, and O-methyltenellin A are also produced but the enzymes involved in their biosynthesis have still to be determined. This Beauveria bassiana (strain ARSEF 2860) (White muscardine disease fungus) protein is Methyltransferase 1.